The sequence spans 387 residues: Erythronate-4-phosphate dehydrogenase (387 aa).

2 residues coordinate substrate: Ser45 and Thr67. Asp147 lines the NAD(+) pocket. Arg208 is an active-site residue. Asp232 serves as a coordination point for NAD(+). Residue Glu237 is part of the active site. Residue His254 is the Proton donor of the active site. An NAD(+)-binding site is contributed by Gly257. Residue Tyr258 participates in substrate binding.

The protein belongs to the D-isomer specific 2-hydroxyacid dehydrogenase family. PdxB subfamily. Homodimer.

It is found in the cytoplasm. It carries out the reaction 4-phospho-D-erythronate + NAD(+) = (R)-3-hydroxy-2-oxo-4-phosphooxybutanoate + NADH + H(+). It participates in cofactor biosynthesis; pyridoxine 5'-phosphate biosynthesis; pyridoxine 5'-phosphate from D-erythrose 4-phosphate: step 2/5. Its function is as follows. Catalyzes the oxidation of erythronate-4-phosphate to 3-hydroxy-2-oxo-4-phosphonooxybutanoate. This Shewanella sediminis (strain HAW-EB3) protein is Erythronate-4-phosphate dehydrogenase.